Consider the following 408-residue polypeptide: Peptidase T (408 aa).

Histidine 78 contacts Zn(2+). Aspartate 80 is an active-site residue. Position 140 (aspartate 140) interacts with Zn(2+). Glutamate 173 serves as the catalytic Proton acceptor. Residues glutamate 174, aspartate 196, and histidine 379 each coordinate Zn(2+).

It belongs to the peptidase M20B family. It depends on Zn(2+) as a cofactor.

The protein localises to the cytoplasm. It carries out the reaction Release of the N-terminal residue from a tripeptide.. Functionally, cleaves the N-terminal amino acid of tripeptides. The chain is Peptidase T from Escherichia coli O9:H4 (strain HS).